We begin with the raw amino-acid sequence, 313 residues long: Phenylalanine-4-hydroxylase (313 aa).

Residues His154, His159, and Glu200 each contribute to the Fe cation site.

This sequence belongs to the biopterin-dependent aromatic amino acid hydroxylase family. It depends on Fe(2+) as a cofactor.

The catalysed reaction is (6R)-L-erythro-5,6,7,8-tetrahydrobiopterin + L-phenylalanine + O2 = (4aS,6R)-4a-hydroxy-L-erythro-5,6,7,8-tetrahydrobiopterin + L-tyrosine. It functions in the pathway amino-acid degradation; L-phenylalanine degradation; acetoacetate and fumarate from L-phenylalanine: step 1/6. The sequence is that of Phenylalanine-4-hydroxylase (phhA) from Ralstonia nicotianae (strain ATCC BAA-1114 / GMI1000) (Ralstonia solanacearum).